A 244-amino-acid polypeptide reads, in one-letter code: Phosphoadenosine 5'-phosphosulfate reductase (244 aa).

Cysteine 239 acts as the Nucleophile; cysteine thiosulfonate intermediate in catalysis.

The protein belongs to the PAPS reductase family. CysH subfamily.

The protein resides in the cytoplasm. The catalysed reaction is [thioredoxin]-disulfide + sulfite + adenosine 3',5'-bisphosphate + 2 H(+) = [thioredoxin]-dithiol + 3'-phosphoadenylyl sulfate. Its pathway is sulfur metabolism; hydrogen sulfide biosynthesis; sulfite from sulfate: step 3/3. Its function is as follows. Catalyzes the formation of sulfite from phosphoadenosine 5'-phosphosulfate (PAPS) using thioredoxin as an electron donor. In Salmonella typhi, this protein is Phosphoadenosine 5'-phosphosulfate reductase.